Reading from the N-terminus, the 144-residue chain is MIALIQRVSQAKVNVKGETIGKIGKGLLVLLGVEKEDNREKADKLAEKVLNYRIFSDENDKMNLNVQQAQGELLIVSQFTLAADTQKGLRPSFSKGASPALANELYEYFIQKCAEKLPVSTGQFAADMQVSLTNDGPVTFWLNV.

Positions Gly-136–Pro-137 match the Gly-cisPro motif, important for rejection of L-amino acids motif.

Belongs to the DTD family. Homodimer.

The protein resides in the cytoplasm. The enzyme catalyses glycyl-tRNA(Ala) + H2O = tRNA(Ala) + glycine + H(+). The catalysed reaction is a D-aminoacyl-tRNA + H2O = a tRNA + a D-alpha-amino acid + H(+). An aminoacyl-tRNA editing enzyme that deacylates mischarged D-aminoacyl-tRNAs. Also deacylates mischarged glycyl-tRNA(Ala), protecting cells against glycine mischarging by AlaRS. Acts via tRNA-based rather than protein-based catalysis; rejects L-amino acids rather than detecting D-amino acids in the active site. By recycling D-aminoacyl-tRNA to D-amino acids and free tRNA molecules, this enzyme counteracts the toxicity associated with the formation of D-aminoacyl-tRNA entities in vivo and helps enforce protein L-homochirality. The chain is D-aminoacyl-tRNA deacylase from Haemophilus influenzae (strain 86-028NP).